A 364-amino-acid chain; its full sequence is Nucleoside ABC transporter permease protein NupB (364 aa).

8 consecutive transmembrane segments (helical) span residues 9-29, 77-99, 105-125, 138-158, 195-215, 244-264, 284-304, and 326-346; these read LVPL…MLAF, FNIG…ALSF, LLMI…MGFI, VITT…MIHS, TLNI…IIFT, LILS…VYGF, MAVA…ALLF, and VVTA…VMLP.

Belongs to the binding-protein-dependent transport system permease family. The complex is composed of two ATP-binding proteins (NupA), two transmembrane proteins (NupB and NupC) and a solute-binding protein (BmpA).

It localises to the cell membrane. Its function is as follows. Part of an ABC transporter complex involved in the uptake of all common nucleosides. Responsible for the translocation of the substrate across the membrane. The polypeptide is Nucleoside ABC transporter permease protein NupB (Lactococcus lactis subsp. cremoris (strain MG1363)).